The primary structure comprises 209 residues: MWKLNKSKVLIEDSPDEEIQAQQDAQIKDQLLQEEVQSPVSQLATKELQSLKTSFSSMKGQVTVQGASFRGWKEVTSIFNKDDEQQLLKGAKSKVISAKPKEDLKTEKKAGFWDSLAIKQNIQPKKADEIEGWEPPHITVEESPTFPDDGLDDPNSWPGWEDETKGSTKYTNLTSSGNSSRWSIKSAGKLVSIRRRSKGNLTENWKELE.

Residues 126–183 form a disordered region; sequence KADEIEGWEPPHITVEESPTFPDDGLDDPNSWPGWEDETKGSTKYTNLTSSGNSSRWS. A compositionally biased stretch (polar residues) spans 167–183; it reads STKYTNLTSSGNSSRWS.

It belongs to the TDRP family.

It is found in the nucleus. The protein resides in the cytoplasm. This Xenopus laevis (African clawed frog) protein is Testis development-related protein (tdrp).